A 568-amino-acid chain; its full sequence is Glucose-6-phosphate isomerase, cytosolic 1 (568 aa).

The active-site Proton donor is E360. Active-site residues include H391 and K516.

The protein belongs to the GPI family. Homodimer.

It localises to the cytoplasm. The catalysed reaction is alpha-D-glucose 6-phosphate = beta-D-fructose 6-phosphate. It participates in carbohydrate degradation; glycolysis; D-glyceraldehyde 3-phosphate and glycerone phosphate from D-glucose: step 2/4. The chain is Glucose-6-phosphate isomerase, cytosolic 1 (PGIC1) from Clarkia mildrediae.